The sequence spans 46 residues: GLFSKFNKKKIKSGLIKIIKTAGKEAGLEALRTGIDVIGCKIKGEC.

The cysteines at positions 40 and 46 are disulfide-linked.

In terms of tissue distribution, expressed by the skin glands.

Its subcellular location is the secreted. Mast cell degranulating peptide. Causes histamine release from rat peritoneal mast cells in vitro. Has antibacterial activity against the Gram-negative bacterium E.coli K12 and Gram-positive bacterium M.luteus NCT C2665. This chain is Esculentin-1SEa, found in Lithobates sevosus (Dusky gopher frog).